A 336-amino-acid chain; its full sequence is uncharacterized protein (336 aa).

The protein to bacterial alkanal monooxygenase alpha and beta chains.

This is an uncharacterized protein from Bacillus subtilis (strain 168).